Consider the following 5209-residue polypeptide: E3 ubiquitin-protein ligase rnf213-alpha (5209 aa).

2 stretches are compositionally biased toward polar residues: residues 27-52 and 61-72; these read SQSYETTQGTPHDKSQTPSIVPQITN and ESKSLEIQNANV. Residues 27 to 373 form a disordered region; that stretch reads SQSYETTQGT…KRNTRSTQHI (347 aa). A compositionally biased stretch (basic residues) spans 85-101; it reads PKKKKRKKRKKEKKKKS. Residues 108–118 show a composition bias toward low complexity; the sequence is SSLTSDLSDIS. Over residues 119-128 the composition is skewed to basic and acidic residues; the sequence is LTDKEKKMDT. 2 stretches are compositionally biased toward polar residues: residues 167-177 and 184-195; these read LSASALTTGSS and IGTTQKPVSASA. Basic and acidic residues predominate over residues 205–218; that stretch reads QTKEEKVKCKDEGQ. A compositionally biased stretch (polar residues) spans 219–243; it reads KSLSAKAQHTPNANVDQNANVQSDA. Residues 256–269 are compositionally biased toward low complexity; sequence KSSSVKTKPSKSTV. Composition is skewed to basic and acidic residues over residues 271-288 and 330-352; these read DPKKTESEKQKSGERDNE and MKVEKKPAGGKKDSSADQKSKES. ATP is bound by residues 2036 to 2041, Glu-2135, Asp-2193, Arg-2252, Lys-2535, and Ser-2610; that span reads GVGKSL. Zn(2+)-binding residues include Cys-4005, Cys-4008, Cys-4020, His-4022, Cys-4025, Cys-4028, Cys-4040, Cys-4043, Cys-4507, and His-4511. Residues 4005 to 4043 form an RING-type zinc finger; that stretch reads CPVCMGDPRDPLSLPCDHIYCLTCIRQWLVPGQMHCPLC. The RZ-type zinc-finger motif lies at 4487-4557; that stretch reads MPDDMLAVAQ…MQIQADRTQS (71 aa). Catalysis depends on Cys-4518, which acts as the Nucleophile; for E3 ubiquitin-lipopolysaccharide ligase activity. Cys-4527 and Cys-4530 together coordinate Zn(2+).

Belongs to the AAA ATPase family.

The protein localises to the cytoplasm. It localises to the cytosol. Its subcellular location is the lipid droplet. It catalyses the reaction S-ubiquitinyl-[E2 ubiquitin-conjugating enzyme]-L-cysteine + [acceptor protein]-L-lysine = [E2 ubiquitin-conjugating enzyme]-L-cysteine + N(6)-ubiquitinyl-[acceptor protein]-L-lysine.. It carries out the reaction ATP + H2O = ADP + phosphate + H(+). It participates in protein modification; protein ubiquitination. In terms of biological role, atypical E3 ubiquitin ligase that can catalyze ubiquitination of both proteins and lipids, and which is involved in various processes, such as lipid metabolism, angiogenesis and cell-autonomous immunity. Acts as a key immune sensor by catalyzing ubiquitination of the lipid A moiety of bacterial lipopolysaccharide (LPS) via its RZ-type zinc-finger: restricts the proliferation of cytosolic bacteria, such as Salmonella, by generating the bacterial ubiquitin coat through the ubiquitination of LPS. Ubiquitination of LPS triggers cell-autonomous immunity, such as antibacterial autophagy, leading to degradation of the microbial invader. Involved in lipid metabolism by regulating fat storage and lipid droplet formation; act by inhibiting the lipolytic process. Also regulates lipotoxicity by inhibiting desaturation of fatty acids. Also acts as an E3 ubiquitin-protein ligase via its RING-type zinc finger. Involved in the non-canonical Wnt signaling pathway in vascular development: acts by mediating ubiquitination and degradation of proteins downstream of rspo3, leading to inhibit the non-canonical Wnt signaling pathway and promoting vessel regression. Also has ATPase activity; ATPase activity is required for ubiquitination of LPS. Also involved in neuromuscular regulation. The chain is E3 ubiquitin-protein ligase rnf213-alpha from Danio rerio (Zebrafish).